Reading from the N-terminus, the 395-residue chain is Probable inactive serine/threonine-protein kinase DDB_G0293746 (395 aa).

A Protein kinase domain is found at Tyr-9–Phe-395. Residues Ile-15–Tyr-23 and Lys-54 contribute to the ATP site. Positions Asn-213–Leu-266 are disordered.

The protein belongs to the protein kinase superfamily. Ser/Thr protein kinase family.

This is Probable inactive serine/threonine-protein kinase DDB_G0293746 from Dictyostelium discoideum (Social amoeba).